The chain runs to 706 residues: Paxillin-like protein 1 (706 aa).

Disordered regions lie at residues 24–192, 222–258, 279–341, and 514–537; these read ERAG…EQDL, VLDQKLGKEQQKEESSIEYESEGQQEDENDIESLNFE, AKQE…TKVE, and IDNSKSNDSHVLPNGGTTRYSSDA. Residues 35–64 are compositionally biased toward polar residues; that stretch reads PFSSQRNASTGSLQASVKSPPITRQRNVSA. 2 positions are modified to phosphoserine: Ser-43 and Ser-63. Composition is skewed to low complexity over residues 73 to 86 and 117 to 129; these read KSAYTASSKSAYSS and SSRPSDISRSISR. Composition is skewed to basic and acidic residues over residues 130–150 and 222–236; these read PSERASQEDPFRFERDLDRQA and VLDQKLGKEQQKEES. Positions 237-252 are enriched in acidic residues; it reads SIEYESEGQQEDENDI. The span at 279 to 290 shows a compositional bias: basic and acidic residues; sequence AKQEEKNTEPKI. Polar residues predominate over residues 296–308; sequence TRESNTPSLTMNA. LIM zinc-binding domains lie at 556–612 and 621–672; these read CRAC…CQKH and CKVC…CGNH.

The protein is Paxillin-like protein 1 (PXL1) of Saccharomyces cerevisiae (strain ATCC 204508 / S288c) (Baker's yeast).